The following is a 783-amino-acid chain: MDKKTLNTLEYNEIKNKIEKLCKSKLGKSIANKLEPMIEEDEIRQSLDETYEAMSMIYKFSNPPIYEIINVKASIMHVSKGGYIVPEVLLKIGQILNSVHDIKRYAGESDENYENCPMIMAMMDSLVEEPDLVATINNAIISEDEISDNASRNLARIRQTKRQKTENIRDKINSILSSNDQALQENIVTMRDDRYVIPVKVSHKSSFKGIVHDHSSSGQTVYIEPMEVVELNNELRMLEAEEREEIIRILKEISDRVYDVKDSIFVDQDVLSKLDFIFAKAKYAIEIDATNPKLNTNGYFNFKNARHPLLDKKKVVPISIYLGDDYNTLVITGPNTGGKTVTLKTVGLITLMAQSGILIPVDENSEVAIFDNIFTDIGDEQSIEQSLSTFSAHMKNIVHIVNNITFNSLVLFDELGAGTDPTEGAALAIAILRIFLYKSIRTIATTHYSQLKIFALTEKYVKNGSVEFDVNTLSPTYKLRIGIPGKSNAFEISRRLGLDDDIINNAKEILSQEDKDFEDVLSDIESKKKQIDEDKQRQLELKEDLLKLRDRYEKEIEKTKLEKEKIINEAKENANEIYMRAKEESRELINKLKFLEKESDARTVANDVENKFNKRIKKSSNKKLLNETSKKQKLQLGDEVEILGIEQQGTIVSEPDKKGDLLVQVGILKINANVKNLKKIKEKEVIQSSKSIKSIIKNKANSDIKSEIDLRGKNIEEAIYELDKYIDDCVIVGLKKVNIIHGKGTGMLRKGIREYLRSDKRVKKIEDAGYNEGGLGATFIYLK.

ATP is bound at residue 333–340 (GPNTGGKT). Residues 708–783 (IDLRGKNIEE…GLGATFIYLK (76 aa)) form the Smr domain.

Belongs to the DNA mismatch repair MutS family. MutS2 subfamily. As to quaternary structure, homodimer. Binds to stalled ribosomes, contacting rRNA.

Endonuclease that is involved in the suppression of homologous recombination and thus may have a key role in the control of bacterial genetic diversity. Its function is as follows. Acts as a ribosome collision sensor, splitting the ribosome into its 2 subunits. Detects stalled/collided 70S ribosomes which it binds and splits by an ATP-hydrolysis driven conformational change. Acts upstream of the ribosome quality control system (RQC), a ribosome-associated complex that mediates the extraction of incompletely synthesized nascent chains from stalled ribosomes and their subsequent degradation. Probably generates substrates for RQC. This Finegoldia magna (strain ATCC 29328 / DSM 20472 / WAL 2508) (Peptostreptococcus magnus) protein is Endonuclease MutS2.